Reading from the N-terminus, the 434-residue chain is Protein TolB homolog (434 aa).

An N-terminal signal peptide occupies residues M1 to A27. The tract at residues S413–K434 is disordered.

The protein belongs to the TolB family.

The protein resides in the periplasm. This Chlorobaculum tepidum (strain ATCC 49652 / DSM 12025 / NBRC 103806 / TLS) (Chlorobium tepidum) protein is Protein TolB homolog.